The primary structure comprises 394 residues: Aromatic aminotransferase ISS1 (394 aa).

Residue glycine 2 is modified to N-acetylglycine. Glycine 38 serves as a coordination point for substrate. Residues tyrosine 64, 98–99, tyrosine 123, asparagine 176, tyrosine 207, and 230–232 contribute to the pyridoxal 5'-phosphate site; these read AN and SFS. 2 residues coordinate substrate: tyrosine 123 and asparagine 176. Lysine 233 carries the post-translational modification N6-(pyridoxal phosphate)lysine. Arginine 241 lines the pyridoxal 5'-phosphate pocket. Arginine 362 and arginine 374 together coordinate substrate.

The protein belongs to the class-I pyridoxal-phosphate-dependent aminotransferase family. Homodimer. Pyridoxal 5'-phosphate serves as cofactor. In terms of tissue distribution, expressed in roots, cotyledons and flowers.

It is found in the cytoplasm. It catalyses the reaction a 2-oxocarboxylate + L-methionine = 4-methylsulfanyl-2-oxobutanoate + an L-alpha-amino acid. It carries out the reaction L-tryptophan + 2-oxoglutarate = indole-3-pyruvate + L-glutamate. The enzyme catalyses L-tyrosine + 2-oxoglutarate = 3-(4-hydroxyphenyl)pyruvate + L-glutamate. Functionally, coordinates and prevents auxin (IAA) and ethylene biosynthesis, thus regulating auxin homeostasis in young seedlings. Shows aminotransferase activity with methionine; can use the ethylene biosynthetic intermediate L-methionine (L-Met) as an amino donor and the auxin biosynthetic intermediate, indole-3-pyruvic acid (3-IPA) as an amino acceptor to produce L-tryptophan (L-Trp) and 2-oxo-4-methylthiobutyric acid (KMBA). Can also use tryptophan (Trp), phenylalanine (Phe), and tyrosine (Tyr) as substrates. Regulates tryptophan (Trp) homeostasis and catabolism in mature plants. Also possibly involved in the metabolism of other aromatic amino acids and phenylpropanoid homeostasis. This chain is Aromatic aminotransferase ISS1, found in Arabidopsis thaliana (Mouse-ear cress).